A 136-amino-acid polypeptide reads, in one-letter code: Probable disulfide formation protein (136 aa).

A helical transmembrane segment spans residues serine 7–phenylalanine 26. Cysteines 36 and 39 form a disulfide. Helical transmembrane passes span tyrosine 41–glutamate 60 and tyrosine 67–phenylalanine 84. An intrachain disulfide couples cysteine 96 to cysteine 101. The chain crosses the membrane as a helical span at residues serine 109–threonine 131.

The protein belongs to the DsbB family. BdbC subfamily.

It is found in the cell inner membrane. Required for disulfide bond formation in some proteins. The chain is Probable disulfide formation protein from Chlamydia pneumoniae (Chlamydophila pneumoniae).